The following is a 92-amino-acid chain: Small ribosomal subunit protein bS20 (92 aa).

A disordered region spans residues 1–23 (MANTPSAKKRAKQAEKRRSHNAS). A compositionally biased stretch (basic residues) spans 7 to 20 (AKKRAKQAEKRRSH).

This sequence belongs to the bacterial ribosomal protein bS20 family.

In terms of biological role, binds directly to 16S ribosomal RNA. This is Small ribosomal subunit protein bS20 from Pseudomonas entomophila (strain L48).